The sequence spans 401 residues: MSLYDDLGVETSDSKTEGWSKNFKLLQSQLQVKKAALTQAKSQRTKQSTVLAPVIDLKRGGSSDDRQIVDTPPHVAAGLKDPVPSGFSAGEVLIPLADEYDPMFPNDYEKVVKRQREERQRQRELERQKEIEEREKRRKDRHEASGFARRPDPDSDEDEDYERERRKRSMGGAAIAPPTSLVEKDKELPRDFPYEEDSRPRSQSSKAAIPPPVYEEQDRPRSPTGPSNSFLANMGGTVAHKIMQKYGFREGQGLGKHEQGLSTALSVEKTSKRGGKIIVGDATEKDASKKSDSNPLTEILKCPTKVVLLRNMVGAGEVDEDLEVETKEECEKYGKVGKCVIFEIPGAPDDEAVRIFLEFERVESAIKAVVDLNGRYFGGRVVKACFYNLDKFRVLDLAEQV.

S2 bears the N-acetylserine mark. Position 2 is a phosphoserine (S2). A Glycyl lysine isopeptide (Lys-Gly) (interchain with G-Cter in SUMO2) cross-link involves residue K15. Residue K21 is modified to N6-acetyllysine. Residues K24 and K33 each participate in a glycyl lysine isopeptide (Lys-Gly) (interchain with G-Cter in SUMO2) cross-link. N6-acetyllysine; alternate is present on K41. K41 participates in a covalent cross-link: Glycyl lysine isopeptide (Lys-Gly) (interchain with G-Cter in SUMO2); alternate. The segment covering 57–68 (LKRGGSSDDRQI) has biased composition (basic and acidic residues). Disordered regions lie at residues 57–84 (LKRG…DPVP) and 114–233 (RQRE…FLAN). A Glycyl lysine isopeptide (Lys-Gly) (interchain with G-Cter in SUMO2) cross-link involves residue K58. Phosphothreonine is present on T71. A compositionally biased stretch (basic and acidic residues) spans 114 to 153 (RQREERQRQRELERQKEIEEREKRRKDRHEASGFARRPDP). 2 positions are modified to phosphoserine: S155 and S169. Positions 182-200 (VEKDKELPRDFPYEEDSRP) are enriched in basic and acidic residues. Residue S222 is modified to Phosphoserine. The G-patch domain maps to 235–283 (GGTVAHKIMQKYGFREGQGLGKHEQGLSTALSVEKTSKRGGKIIVGDAT). Residue T237 is modified to Phosphothreonine. A Glycyl lysine isopeptide (Lys-Gly) (interchain with G-Cter in SUMO2) cross-link involves residue K256. Position 266 is a phosphoserine (S266). A Glycyl lysine isopeptide (Lys-Gly) (interchain with G-Cter in SUMO2) cross-link involves residue K276. Phosphoserine is present on residues S291 and S293. The region spanning 306-385 (VVLLRNMVGA…YFGGRVVKAC (80 aa)) is the RRM domain.

Binds SXL. Associates with the spliceosome. Interacts with SF3B1, SF1 and U2AF2.

The protein resides in the nucleus. In terms of biological role, splice factor that binds to the single-stranded 3'AG at the exon/intron border and promotes its utilization in the second catalytic step. Involved in the regulation of alternative splicing and the utilization of cryptic splice sites. Promotes the utilization of a cryptic splice site created by the beta-110 mutation in the HBB gene. The resulting frameshift leads to sickle cell anemia. The polypeptide is Splicing factor 45 (RBM17) (Homo sapiens (Human)).